Here is a 274-residue protein sequence, read N- to C-terminus: 1D-myo-inositol 2-acetamido-2-deoxy-alpha-D-glucopyranoside deacetylase 2 (274 aa).

Residues His6, Asp9, and His140 each coordinate Zn(2+).

The protein belongs to the MshB deacetylase family. The cofactor is Zn(2+).

The enzyme catalyses 1D-myo-inositol 2-acetamido-2-deoxy-alpha-D-glucopyranoside + H2O = 1D-myo-inositol 2-amino-2-deoxy-alpha-D-glucopyranoside + acetate. Its function is as follows. Catalyzes the deacetylation of 1D-myo-inositol 2-acetamido-2-deoxy-alpha-D-glucopyranoside (GlcNAc-Ins) in the mycothiol biosynthesis pathway. The protein is 1D-myo-inositol 2-acetamido-2-deoxy-alpha-D-glucopyranoside deacetylase 2 of Saccharopolyspora erythraea (strain ATCC 11635 / DSM 40517 / JCM 4748 / NBRC 13426 / NCIMB 8594 / NRRL 2338).